We begin with the raw amino-acid sequence, 274 residues long: Protein RecA (274 aa).

G43–T50 provides a ligand contact to ATP.

It belongs to the RecA family.

It localises to the cytoplasm. Its function is as follows. Can catalyze the hydrolysis of ATP in the presence of single-stranded DNA, the ATP-dependent uptake of single-stranded DNA by duplex DNA, and the ATP-dependent hybridization of homologous single-stranded DNAs. It interacts with LexA causing its activation and leading to its autocatalytic cleavage. The sequence is that of Protein RecA from Neisseria mucosa.